The sequence spans 340 residues: Maltose epimerase (340 aa).

Arginine 79 contributes to the substrate binding site. Catalysis depends on histidine 178, which acts as the Proton donor. Aspartate 247 contributes to the substrate binding site. Glutamate 305 acts as the Proton acceptor in catalysis.

This sequence belongs to the aldose epimerase family.

It catalyses the reaction alpha-maltose = beta-maltose. The protein operates within carbohydrate metabolism; hexose metabolism. Catalyzes the interconversion of alpha and beta anomers of maltose. The protein is Maltose epimerase of Levilactobacillus brevis (strain ATCC 367 / BCRC 12310 / CIP 105137 / JCM 1170 / LMG 11437 / NCIMB 947 / NCTC 947) (Lactobacillus brevis).